Here is a 486-residue protein sequence, read N- to C-terminus: Maintenance of mitochondrial morphology protein 1 (486 aa).

Residues M1 to G20 lie on the Lumenal side of the membrane. Residues F21–F41 traverse the membrane as a helical segment. At G42 to N486 the chain is on the cytoplasmic side. Disordered stretches follow at residues T70 to T96, T271 to S320, and R387 to N486. The span at S83–T96 shows a compositional bias: polar residues. The region spanning Q128 to P379 is the SMP-LTD domain. Positions T271–A282 are enriched in pro residues. The segment covering Q292–S306 has biased composition (low complexity). 2 stretches are compositionally biased toward polar residues: residues T398–A407 and D440–V450. Residues M460–H474 show a composition bias toward basic and acidic residues.

The protein belongs to the MMM1 family. Homodimer. Component of the ER-mitochondria encounter structure (ERMES) or MDM complex, composed of mmm1, mdm10, mdm12 and mdm34. A mmm1 homodimer associates with one molecule of mdm12 on each side in a pairwise head-to-tail manner, and the SMP-LTD domains of mmm1 and mdm12 generate a continuous hydrophobic tunnel for phospholipid trafficking.

The protein resides in the endoplasmic reticulum membrane. Its function is as follows. Component of the ERMES/MDM complex, which serves as a molecular tether to connect the endoplasmic reticulum (ER) and mitochondria. Components of this complex are involved in the control of mitochondrial shape and protein biogenesis, and function in nonvesicular lipid trafficking between the ER and mitochondria. The mdm12-mmm1 subcomplex functions in the major beta-barrel assembly pathway that is responsible for biogenesis of all outer membrane beta-barrel proteins, and acts in a late step after the SAM complex. The mdm10-mdm12-mmm1 subcomplex further acts in the TOM40-specific pathway after the action of the mdm12-mmm1 complex. Essential for establishing and maintaining the structure of mitochondria and maintenance of mtDNA nucleoids. This chain is Maintenance of mitochondrial morphology protein 1, found in Aspergillus terreus (strain NIH 2624 / FGSC A1156).